Reading from the N-terminus, the 184-residue chain is Holliday junction branch migration complex subunit RuvA (184 aa).

The interval Met1 to Ala61 is domain I. A domain II region spans residues Asp62–Gln135. A region of interest (flexible linker) is located at residue Gln135. The domain III stretch occupies residues Gln135–Lys184.

This sequence belongs to the RuvA family. In terms of assembly, homotetramer. Forms an RuvA(8)-RuvB(12)-Holliday junction (HJ) complex. HJ DNA is sandwiched between 2 RuvA tetramers; dsDNA enters through RuvA and exits via RuvB. An RuvB hexamer assembles on each DNA strand where it exits the tetramer. Each RuvB hexamer is contacted by two RuvA subunits (via domain III) on 2 adjacent RuvB subunits; this complex drives branch migration. In the full resolvosome a probable DNA-RuvA(4)-RuvB(12)-RuvC(2) complex forms which resolves the HJ.

Its subcellular location is the cytoplasm. Its function is as follows. The RuvA-RuvB-RuvC complex processes Holliday junction (HJ) DNA during genetic recombination and DNA repair, while the RuvA-RuvB complex plays an important role in the rescue of blocked DNA replication forks via replication fork reversal (RFR). RuvA specifically binds to HJ cruciform DNA, conferring on it an open structure. The RuvB hexamer acts as an ATP-dependent pump, pulling dsDNA into and through the RuvAB complex. HJ branch migration allows RuvC to scan DNA until it finds its consensus sequence, where it cleaves and resolves the cruciform DNA. The chain is Holliday junction branch migration complex subunit RuvA from Nautilia profundicola (strain ATCC BAA-1463 / DSM 18972 / AmH).